Reading from the N-terminus, the 118-residue chain is Basic phospholipase A2 PA-9C (118 aa).

Intrachain disulfides connect C11-C71, C27-C117, C29-C45, C44-C98, C51-C91, C60-C84, and C78-C89. The Ca(2+) site is built by Y28, G30, and G32. The active site involves H48. D49 is a binding site for Ca(2+). D92 is a catalytic residue.

Belongs to the phospholipase A2 family. Group I subfamily. D49 sub-subfamily. Requires Ca(2+) as cofactor. Expressed by the venom gland.

It is found in the secreted. The catalysed reaction is a 1,2-diacyl-sn-glycero-3-phosphocholine + H2O = a 1-acyl-sn-glycero-3-phosphocholine + a fatty acid + H(+). In terms of biological role, PLA2 catalyzes the calcium-dependent hydrolysis of the 2-acyl groups in 3-sn-phosphoglycerides. The protein is Basic phospholipase A2 PA-9C of Pseudechis australis (Mulga snake).